The sequence spans 67 residues: Bombesin (67 aa).

The N-terminal stretch at 1 to 30 (MSLLPAVKVLPLGYLGIVLVFSLILRSAMV) is a signal peptide. Residues 31 to 49 (DFIQDAGKLERIDTYKREA) constitute a propeptide that is removed on maturation. The residue at position 50 (Gln50) is a Pyrrolidone carboxylic acid. At Met64 the chain carries Methionine amide.

Belongs to the bombesin/neuromedin-B/ranatensin family. As to expression, expressed by the skin dorsal glands.

The protein resides in the secreted. Functionally, stimulates smooth muscle contraction in isolated rat stomach strip. In Sanguirana varians (Palawan frog), this protein is Bombesin.